An 830-amino-acid chain; its full sequence is Outer dense fiber protein 2 (830 aa).

Residues S73 and S74 each carry the phosphoserine modification. T92 is modified (phosphothreonine). A Phosphoserine; by TSSK4 modification is found at S95. A phosphoserine mark is found at S106 and S109. T110 is modified (phosphothreonine). A phosphoserine mark is found at S115 and S129. Residue K138 forms a Glycyl lysine isopeptide (Lys-Gly) (interchain with G-Cter in SUMO2) linkage. S139 bears the Phosphoserine mark. Residues 144-217 (QKGERQMAKR…MSKLVEAEMD (74 aa)) adopt a coiled-coil conformation. T231 carries the post-translational modification Phosphothreonine. Coiled-coil stretches lie at residues 245–423 (DINT…AEQL) and 461–798 (EIIV…NYVQ). Phosphoserine is present on residues S261 and S632. The segment at 537–701 (KNYEGMIDNY…EAIHQAQLRL (165 aa)) is interaction with BBOF1.

Belongs to the ODF2 family. In terms of assembly, self-associates. Associates with microtubules and forms a fibrillar structure partially linked to the microtubule network. Interacts via its C-terminus with PLK1. Interacts with ODF1. Interacts with MARK4; the interaction is required for localization of ODF2 to centrioles. Interacts with TSSK4. Interacts with AKNA. Interacts with CFAP58. Interacts with BBOF1. Interacts with CCDC38. Interacts with CCDC42. Post-translationally, tyrosine phosphorylated. Phosphorylated on Ser-95 by TSSK4. Testis-specific (at protein level). Expressed in spermatids at tubular stage V of the spermatogenic cycle. Highly expressed in the cytoplasm of elongating spermatids (tubular stages X/XI). In step 14/15 spermatids of tubular stage III/IV low expression detected. No expression detected in other testicular cells as well as the early round of spermatids.

It localises to the cytoplasm. It is found in the cytoskeleton. The protein localises to the microtubule organizing center. The protein resides in the centrosome. Its subcellular location is the cell projection. It localises to the cilium. It is found in the centriole. The protein localises to the spindle pole. The protein resides in the flagellum. In terms of biological role, seems to be a major component of sperm tail outer dense fibers (ODF). ODFs are filamentous structures located on the outside of the axoneme in the midpiece and principal piece of the mammalian sperm tail and may help to maintain the passive elastic structures and elastic recoil of the sperm tail. May have a modulating influence on sperm motility. Functions as a general scaffold protein that is specifically localized at the distal/subdistal appendages of mother centrioles. Component of the centrosome matrix required for the localization of PLK1 and NIN to the centrosomes. Required for the formation and/or maintenance of normal CETN1 assembly. The chain is Outer dense fiber protein 2 (Odf2) from Mus musculus (Mouse).